We begin with the raw amino-acid sequence, 311 residues long: 4-hydroxy-3-methylbut-2-enyl diphosphate reductase (311 aa).

Cys12 is a [4Fe-4S] cluster binding site. His41 and His74 together coordinate (2E)-4-hydroxy-3-methylbut-2-enyl diphosphate. Dimethylallyl diphosphate is bound by residues His41 and His74. The isopentenyl diphosphate site is built by His41 and His74. Cys96 serves as a coordination point for [4Fe-4S] cluster. A (2E)-4-hydroxy-3-methylbut-2-enyl diphosphate-binding site is contributed by His124. His124 is a binding site for dimethylallyl diphosphate. His124 lines the isopentenyl diphosphate pocket. Residue Glu126 is the Proton donor of the active site. Residue Thr167 participates in (2E)-4-hydroxy-3-methylbut-2-enyl diphosphate binding. Residue Cys197 participates in [4Fe-4S] cluster binding. (2E)-4-hydroxy-3-methylbut-2-enyl diphosphate is bound by residues Ser225, Ser226, Asn227, and Ser269. Residues Ser225, Ser226, Asn227, and Ser269 each contribute to the dimethylallyl diphosphate site. Isopentenyl diphosphate contacts are provided by Ser225, Ser226, Asn227, and Ser269.

This sequence belongs to the IspH family. The cofactor is [4Fe-4S] cluster.

The catalysed reaction is isopentenyl diphosphate + 2 oxidized [2Fe-2S]-[ferredoxin] + H2O = (2E)-4-hydroxy-3-methylbut-2-enyl diphosphate + 2 reduced [2Fe-2S]-[ferredoxin] + 2 H(+). It catalyses the reaction dimethylallyl diphosphate + 2 oxidized [2Fe-2S]-[ferredoxin] + H2O = (2E)-4-hydroxy-3-methylbut-2-enyl diphosphate + 2 reduced [2Fe-2S]-[ferredoxin] + 2 H(+). Its pathway is isoprenoid biosynthesis; dimethylallyl diphosphate biosynthesis; dimethylallyl diphosphate from (2E)-4-hydroxy-3-methylbutenyl diphosphate: step 1/1. It participates in isoprenoid biosynthesis; isopentenyl diphosphate biosynthesis via DXP pathway; isopentenyl diphosphate from 1-deoxy-D-xylulose 5-phosphate: step 6/6. In terms of biological role, catalyzes the conversion of 1-hydroxy-2-methyl-2-(E)-butenyl 4-diphosphate (HMBPP) into a mixture of isopentenyl diphosphate (IPP) and dimethylallyl diphosphate (DMAPP). Acts in the terminal step of the DOXP/MEP pathway for isoprenoid precursor biosynthesis. This chain is 4-hydroxy-3-methylbut-2-enyl diphosphate reductase, found in Aeromonas salmonicida (strain A449).